The primary structure comprises 188 residues: ATP synthase subunit delta (188 aa).

This sequence belongs to the ATPase delta chain family. In terms of assembly, F-type ATPases have 2 components, F(1) - the catalytic core - and F(0) - the membrane proton channel. F(1) has five subunits: alpha(3), beta(3), gamma(1), delta(1), epsilon(1). F(0) has three main subunits: a(1), b(2) and c(10-14). The alpha and beta chains form an alternating ring which encloses part of the gamma chain. F(1) is attached to F(0) by a central stalk formed by the gamma and epsilon chains, while a peripheral stalk is formed by the delta and b chains.

It is found in the cell membrane. Its function is as follows. F(1)F(0) ATP synthase produces ATP from ADP in the presence of a proton or sodium gradient. F-type ATPases consist of two structural domains, F(1) containing the extramembraneous catalytic core and F(0) containing the membrane proton channel, linked together by a central stalk and a peripheral stalk. During catalysis, ATP synthesis in the catalytic domain of F(1) is coupled via a rotary mechanism of the central stalk subunits to proton translocation. Functionally, this protein is part of the stalk that links CF(0) to CF(1). It either transmits conformational changes from CF(0) to CF(1) or is implicated in proton conduction. This chain is ATP synthase subunit delta, found in Malacoplasma penetrans (strain HF-2) (Mycoplasma penetrans).